We begin with the raw amino-acid sequence, 156 residues long: Small ribosomal subunit protein uS7 (156 aa).

This sequence belongs to the universal ribosomal protein uS7 family. Part of the 30S ribosomal subunit. Contacts proteins S9 and S11.

Its function is as follows. One of the primary rRNA binding proteins, it binds directly to 16S rRNA where it nucleates assembly of the head domain of the 30S subunit. Is located at the subunit interface close to the decoding center, probably blocks exit of the E-site tRNA. This chain is Small ribosomal subunit protein uS7, found in Streptococcus pyogenes serotype M3 (strain ATCC BAA-595 / MGAS315).